The sequence spans 209 residues: MSKLHVVDHPLIQHKLAFIRDKETGSKTFRELVNEVSMLMAYEVTRELQTEEYEVETPISTAKTRILSGKKLGLVPILRAGLGMVESVRNLIPAARVGHIGVYRDPETLQPVEYYCKLPQDIHERELIVLDPMLATGGSAKASIQFIKDRGGTNIRFMCINAAPEGVEELQKAHPDVDIWTCAVDEKLNEKAYIVPGLGDAGDRLFGTK.

5-phospho-alpha-D-ribose 1-diphosphate contacts are provided by residues arginine 79, arginine 104, and 131 to 139 (DPMLATGGS). Uracil is bound by residues isoleucine 194 and 199 to 201 (GDA). Aspartate 200 serves as a coordination point for 5-phospho-alpha-D-ribose 1-diphosphate.

The protein belongs to the UPRTase family. Mg(2+) serves as cofactor.

The catalysed reaction is UMP + diphosphate = 5-phospho-alpha-D-ribose 1-diphosphate + uracil. Its pathway is pyrimidine metabolism; UMP biosynthesis via salvage pathway; UMP from uracil: step 1/1. Its activity is regulated as follows. Allosterically activated by GTP. Catalyzes the conversion of uracil and 5-phospho-alpha-D-ribose 1-diphosphate (PRPP) to UMP and diphosphate. The sequence is that of Uracil phosphoribosyltransferase from Natranaerobius thermophilus (strain ATCC BAA-1301 / DSM 18059 / JW/NM-WN-LF).